A 574-amino-acid chain; its full sequence is Ribonuclease Y (574 aa).

The chain crosses the membrane as a helical span at residues 1 to 21 (MSLLDLVLLLLVLGLGGVLLL). The KH domain occupies 264 to 327 (AVTVVPIPSD…EIARMALEEL (64 aa)). The HD domain maps to 390 to 483 (VLKHSIQVAH…VAAADALSAA (94 aa)).

It belongs to the RNase Y family.

The protein resides in the cell membrane. In terms of biological role, endoribonuclease that initiates mRNA decay. The protein is Ribonuclease Y of Thermus thermophilus (strain ATCC BAA-163 / DSM 7039 / HB27).